Reading from the N-terminus, the 599-residue chain is Translation initiation factor IF-2 (599 aa).

One can recognise a tr-type G domain in the interval proline 111 to glutamate 278. Positions glycine 120–threonine 127 are G1. Glycine 120–threonine 127 lines the GTP pocket. Residues glycine 145–histidine 149 are G2. A G3 region spans residues aspartate 166–glycine 169. GTP-binding positions include aspartate 166–histidine 170 and asparagine 220–aspartate 223. The G4 stretch occupies residues asparagine 220 to aspartate 223. The interval serine 256–leucine 258 is G5.

It belongs to the TRAFAC class translation factor GTPase superfamily. Classic translation factor GTPase family. IF-2 subfamily.

It localises to the cytoplasm. Its function is as follows. One of the essential components for the initiation of protein synthesis. Protects formylmethionyl-tRNA from spontaneous hydrolysis and promotes its binding to the 30S ribosomal subunits. Also involved in the hydrolysis of GTP during the formation of the 70S ribosomal complex. This chain is Translation initiation factor IF-2, found in Mesomycoplasma hyopneumoniae (strain 232) (Mycoplasma hyopneumoniae).